A 394-amino-acid chain; its full sequence is Elongation factor Tu (394 aa).

One can recognise a tr-type G domain in the interval 10–205 (KPHMNVGTIG…SMDNYFDLPE (196 aa)). The interval 19–26 (GHVDHGKT) is G1. Position 19–26 (19–26 (GHVDHGKT)) interacts with GTP. T26 is a Mg(2+) binding site. Positions 61–65 (GITIN) are G2. Positions 82–85 (DCPG) are G3. GTP is bound by residues 82–86 (DCPGH) and 137–140 (NKLD). Residues 137–140 (NKLD) are G4. The tract at residues 173–175 (SAF) is G5.

This sequence belongs to the TRAFAC class translation factor GTPase superfamily. Classic translation factor GTPase family. EF-Tu/EF-1A subfamily. In terms of assembly, monomer.

The protein localises to the cytoplasm. The enzyme catalyses GTP + H2O = GDP + phosphate + H(+). In terms of biological role, GTP hydrolase that promotes the GTP-dependent binding of aminoacyl-tRNA to the A-site of ribosomes during protein biosynthesis. The chain is Elongation factor Tu from Borreliella burgdorferi (strain ATCC 35210 / DSM 4680 / CIP 102532 / B31) (Borrelia burgdorferi).